A 121-amino-acid chain; its full sequence is Large ribosomal subunit protein bL12 (121 aa).

This sequence belongs to the bacterial ribosomal protein bL12 family. In terms of assembly, homodimer. Part of the ribosomal stalk of the 50S ribosomal subunit. Forms a multimeric L10(L12)X complex, where L10 forms an elongated spine to which 2 to 4 L12 dimers bind in a sequential fashion. Binds GTP-bound translation factors.

In terms of biological role, forms part of the ribosomal stalk which helps the ribosome interact with GTP-bound translation factors. Is thus essential for accurate translation. The sequence is that of Large ribosomal subunit protein bL12 from Alkaliphilus oremlandii (strain OhILAs) (Clostridium oremlandii (strain OhILAs)).